The following is a 695-amino-acid chain: Elongation factor G (695 aa).

Residues 12-286 (DKIRNIGIMA…AVIDYLPSPL (275 aa)) enclose the tr-type G domain. GTP is bound by residues 21 to 28 (AHIDAGKT), 85 to 89 (DTPGH), and 139 to 142 (NKMD).

It belongs to the TRAFAC class translation factor GTPase superfamily. Classic translation factor GTPase family. EF-G/EF-2 subfamily.

It is found in the cytoplasm. Catalyzes the GTP-dependent ribosomal translocation step during translation elongation. During this step, the ribosome changes from the pre-translocational (PRE) to the post-translocational (POST) state as the newly formed A-site-bound peptidyl-tRNA and P-site-bound deacylated tRNA move to the P and E sites, respectively. Catalyzes the coordinated movement of the two tRNA molecules, the mRNA and conformational changes in the ribosome. The polypeptide is Elongation factor G (Thermotoga neapolitana (strain ATCC 49049 / DSM 4359 / NBRC 107923 / NS-E)).